We begin with the raw amino-acid sequence, 1158 residues long: ATP-dependent helicase/deoxyribonuclease subunit B (1158 aa).

8 to 15 (GRAGTGKS) lines the ATP pocket. 4 residues coordinate [4Fe-4S] cluster: Cys-791, Cys-1112, Cys-1115, and Cys-1121.

The protein belongs to the helicase family. AddB/RexB type 1 subfamily. Heterodimer of AddA and AddB. Requires Mg(2+) as cofactor. It depends on [4Fe-4S] cluster as a cofactor.

Its function is as follows. The heterodimer acts as both an ATP-dependent DNA helicase and an ATP-dependent, dual-direction single-stranded exonuclease. Recognizes the chi site generating a DNA molecule suitable for the initiation of homologous recombination. The AddB subunit has 5' -&gt; 3' nuclease activity but not helicase activity. This Clostridium perfringens (strain SM101 / Type A) protein is ATP-dependent helicase/deoxyribonuclease subunit B.